Reading from the N-terminus, the 470-residue chain is 3-isopropylmalate dehydratase large subunit (470 aa).

Positions 348, 409, and 412 each coordinate [4Fe-4S] cluster.

It belongs to the aconitase/IPM isomerase family. LeuC type 1 subfamily. In terms of assembly, heterodimer of LeuC and LeuD. It depends on [4Fe-4S] cluster as a cofactor.

It catalyses the reaction (2R,3S)-3-isopropylmalate = (2S)-2-isopropylmalate. The protein operates within amino-acid biosynthesis; L-leucine biosynthesis; L-leucine from 3-methyl-2-oxobutanoate: step 2/4. In terms of biological role, catalyzes the isomerization between 2-isopropylmalate and 3-isopropylmalate, via the formation of 2-isopropylmaleate. This chain is 3-isopropylmalate dehydratase large subunit, found in Acidithiobacillus ferrooxidans (strain ATCC 23270 / DSM 14882 / CIP 104768 / NCIMB 8455) (Ferrobacillus ferrooxidans (strain ATCC 23270)).